The sequence spans 180 residues: Large ribosomal subunit protein uL6 (180 aa).

The protein belongs to the universal ribosomal protein uL6 family. As to quaternary structure, part of the 50S ribosomal subunit.

Its function is as follows. This protein binds to the 23S rRNA, and is important in its secondary structure. It is located near the subunit interface in the base of the L7/L12 stalk, and near the tRNA binding site of the peptidyltransferase center. This chain is Large ribosomal subunit protein uL6, found in Clostridium botulinum (strain Eklund 17B / Type B).